Reading from the N-terminus, the 238-residue chain is tRNA (guanine-N(7)-)-methyltransferase (238 aa).

4 residues coordinate S-adenosyl-L-methionine: E68, E93, D120, and D143. Residue D143 is part of the active site. Substrate contacts are provided by residues K147, D179, and 216–219 (TKFE).

Belongs to the class I-like SAM-binding methyltransferase superfamily. TrmB family.

It carries out the reaction guanosine(46) in tRNA + S-adenosyl-L-methionine = N(7)-methylguanosine(46) in tRNA + S-adenosyl-L-homocysteine. Its pathway is tRNA modification; N(7)-methylguanine-tRNA biosynthesis. Its function is as follows. Catalyzes the formation of N(7)-methylguanine at position 46 (m7G46) in tRNA. The chain is tRNA (guanine-N(7)-)-methyltransferase from Shewanella putrefaciens (strain CN-32 / ATCC BAA-453).